The primary structure comprises 568 residues: Phosphoprotein (568 aa).

Disordered regions lie at residues 1 to 22 (MDQD…PGGR) and 40 to 320 (PTDI…GIGE). Residues 7–20 (ILKEDSEVERKAPG) show a composition bias toward basic and acidic residues. The interval 33-41 (DAVLSSEPT) is N0 binding. A compositionally biased stretch (polar residues) spans 50-60 (LHNTINTSQGP). Serine 68 is subject to Phosphoserine; by host. Residues 83 to 101 (RSGEESRVSGRTSKPEAEA) are compositionally biased toward basic and acidic residues. At serine 125 the chain carries Phosphoserine; by host. Basic and acidic residues predominate over residues 150-168 (GIEDENREMAAHPDKRGED). Over residues 191–206 (ASNNGRSMEPGSSHSA) the composition is skewed to polar residues. 3 positions are modified to phosphoserine; by host: serine 192, serine 249, and serine 257. Residues 344–411 (FESSRDASYV…SFRDIYKRFS (68 aa)) form a multimerization region. The stretch at 364 to 429 (YAEMTFNVCG…LLMSNLSTLH (66 aa)) forms a coiled coil. The l protein binding stretch occupies residues 412–445 (EYQKEQNSLLMSNLSTLHIITDRGGKTDNTDSLT). Phosphoserine; by host occurs at positions 447 and 449. The interval 479-568 (DLIREDEFRD…VEEDIESLTN (90 aa)) is interaction with the nucleocapsid (N-RNA).

It belongs to the respirovirus P protein family. As to quaternary structure, homotetramer. Interacts (via multimerization domain) with polymerase L; this interaction forms the polymerase complex. Interacts (via N-terminus) with N0; this interaction allows P to chaperon N0 before encapsidation and form the N-P complex. Interacts (via C-terminus) with N-RNA template; this interaction positions the polymerase on the template. Post-translationally, phosphorylated by PKC/PRKCZ, and other unknown kinases. Phosphorylation is necessary for viral transcription and replication. The N-terminus contains the majority of phosphorylated sites. Ser-249 is the major site of phosphorylation, but is not necessary for most functions.

Its subcellular location is the host cytoplasm. Functionally, essential cofactor of the RNA polymerase L that plays a central role in the transcription and replication by forming the polymerase complex with RNA polymerase L and recruiting L to the genomic N-RNA template for RNA synthesis. Also plays a central role in the encapsidation of nascent RNA chains by forming the encapsidation complex with the nucleocapsid protein N (N-P complex). Acts as a chaperone for newly synthesized free N protein, so-called N0, allowing encapsidation of nascent RNA chains during replication. The nucleoprotein protein N prevents excessive phosphorylation of P, which leads to down-regulation of viral transcription/ replication. Participates, together with N, in the formation of viral factories (viroplasms), which are large inclusions in the host cytoplasm where replication takes place. Recruits host PI4KB and remodel the host endoplasmic reticulum membrane to form viral replication factories. This Sendai virus (strain 6/94) (SeV) protein is Phosphoprotein (P/V/C).